We begin with the raw amino-acid sequence, 302 residues long: Quinolinate synthase (302 aa).

Iminosuccinate contacts are provided by His-24 and Ser-41. A [4Fe-4S] cluster-binding site is contributed by Cys-86. Iminosuccinate-binding positions include 112–114 (YVN) and Ser-129. Cys-171 contacts [4Fe-4S] cluster. Iminosuccinate contacts are provided by residues 197–199 (HPE) and Thr-214. A [4Fe-4S] cluster-binding site is contributed by Cys-259.

Belongs to the quinolinate synthase family. Type 2 subfamily. It depends on [4Fe-4S] cluster as a cofactor.

The protein localises to the cytoplasm. It carries out the reaction iminosuccinate + dihydroxyacetone phosphate = quinolinate + phosphate + 2 H2O + H(+). Its pathway is cofactor biosynthesis; NAD(+) biosynthesis; quinolinate from iminoaspartate: step 1/1. Its function is as follows. Catalyzes the condensation of iminoaspartate with dihydroxyacetone phosphate to form quinolinate. The protein is Quinolinate synthase of Dehalococcoides mccartyi (strain ATCC BAA-2100 / JCM 16839 / KCTC 5957 / BAV1).